A 307-amino-acid chain; its full sequence is Phospho-N-acetylmuramoyl-pentapeptide-transferase (307 aa).

10 helical membrane-spanning segments follow: residues 3-23 (IILF…KYWI), 47-67 (SGTP…FLFF), 71-91 (FFPS…DFKL), 105-125 (IFLS…DYKI), 137-157 (IFYV…INLT), 162-182 (GLAG…NFQF), 186-206 (LTLE…FNSH), 210-230 (IFMG…LSII), 237-257 (LVFL…QVFF), and 285-305 (VVWR…ILWN).

Belongs to the glycosyltransferase 4 family. MraY subfamily. Mg(2+) is required as a cofactor.

It is found in the cell inner membrane. It carries out the reaction UDP-N-acetyl-alpha-D-muramoyl-L-alanyl-gamma-D-glutamyl-meso-2,6-diaminopimeloyl-D-alanyl-D-alanine + di-trans,octa-cis-undecaprenyl phosphate = di-trans,octa-cis-undecaprenyl diphospho-N-acetyl-alpha-D-muramoyl-L-alanyl-D-glutamyl-meso-2,6-diaminopimeloyl-D-alanyl-D-alanine + UMP. Its pathway is cell wall biogenesis; peptidoglycan biosynthesis. Functionally, catalyzes the initial step of the lipid cycle reactions in the biosynthesis of the cell wall peptidoglycan: transfers peptidoglycan precursor phospho-MurNAc-pentapeptide from UDP-MurNAc-pentapeptide onto the lipid carrier undecaprenyl phosphate, yielding undecaprenyl-pyrophosphoryl-MurNAc-pentapeptide, known as lipid I. This chain is Phospho-N-acetylmuramoyl-pentapeptide-transferase, found in Dictyoglomus turgidum (strain DSM 6724 / Z-1310).